Consider the following 165-residue polypeptide: Putative glycine-rich cell wall structural protein 1 (165 aa).

The first 23 residues, Met-1–Ala-23, serve as a signal peptide directing secretion. 2 R2; Tyr-rich repeats span residues Gly-56 to Gly-62 and Gly-93 to Gly-99. Residues Ala-105–Ser-125 form a disordered region. One copy of the R2; Tyr-rich repeat lies at Gly-132–Gly-138. The tract at residues Gly-146 to Glu-165 is disordered.

Its subcellular location is the secreted. It localises to the cell wall. Its function is as follows. Responsible for plasticity of the cell wall. The polypeptide is Putative glycine-rich cell wall structural protein 1 (GRP-1) (Oryza sativa subsp. indica (Rice)).